Reading from the N-terminus, the 498-residue chain is ATP synthase subunit beta, chloroplastic (498 aa).

ATP is bound at residue 172–179; the sequence is GGAGVGKT.

Belongs to the ATPase alpha/beta chains family. In terms of assembly, F-type ATPases have 2 components, CF(1) - the catalytic core - and CF(0) - the membrane proton channel. CF(1) has five subunits: alpha(3), beta(3), gamma(1), delta(1), epsilon(1). CF(0) has four main subunits: a(1), b(1), b'(1) and c(9-12).

It is found in the plastid. It localises to the chloroplast thylakoid membrane. The catalysed reaction is ATP + H2O + 4 H(+)(in) = ADP + phosphate + 5 H(+)(out). Its function is as follows. Produces ATP from ADP in the presence of a proton gradient across the membrane. The catalytic sites are hosted primarily by the beta subunits. The polypeptide is ATP synthase subunit beta, chloroplastic (Sorghum bicolor (Sorghum)).